The primary structure comprises 155 residues: MSHYEGDLRTPESARFAILASRWNARITDTLVAGARQSLAGNGIAEANIDVIRVPGAWELPLVAARLAAAHEHAAILTLGCVIRGDTRHYEHVADRCAEGLMRVQLDFGVPVLNGVLAVERAEDAEARAGGSHGNKGEEVALAALEMVNLLEQLP.

Residues Trp23, 57-59 (AWE), and 81-83 (CVI) contribute to the 5-amino-6-(D-ribitylamino)uracil site. 86–87 (DT) serves as a coordination point for (2S)-2-hydroxy-3-oxobutyl phosphate. Catalysis depends on His89, which acts as the Proton donor. Residue Asn114 coordinates 5-amino-6-(D-ribitylamino)uracil. Arg128 contributes to the (2S)-2-hydroxy-3-oxobutyl phosphate binding site.

The protein belongs to the DMRL synthase family. In terms of assembly, forms an icosahedral capsid composed of 60 subunits, arranged as a dodecamer of pentamers.

It carries out the reaction (2S)-2-hydroxy-3-oxobutyl phosphate + 5-amino-6-(D-ribitylamino)uracil = 6,7-dimethyl-8-(1-D-ribityl)lumazine + phosphate + 2 H2O + H(+). It participates in cofactor biosynthesis; riboflavin biosynthesis; riboflavin from 2-hydroxy-3-oxobutyl phosphate and 5-amino-6-(D-ribitylamino)uracil: step 1/2. In terms of biological role, catalyzes the formation of 6,7-dimethyl-8-ribityllumazine by condensation of 5-amino-6-(D-ribitylamino)uracil with 3,4-dihydroxy-2-butanone 4-phosphate. This is the penultimate step in the biosynthesis of riboflavin. This chain is 6,7-dimethyl-8-ribityllumazine synthase, found in Stenotrophomonas maltophilia (strain R551-3).